Reading from the N-terminus, the 221-residue chain is Orotate phosphoribosyltransferase (221 aa).

K26 serves as a coordination point for 5-phospho-alpha-D-ribose 1-diphosphate. 34-35 lines the orotate pocket; that stretch reads FF. 5-phospho-alpha-D-ribose 1-diphosphate-binding positions include 72-73, R99, K100, K103, H105, and 124-132; these read YK and DDVITAGTA. The orotate site is built by T128 and R156.

Belongs to the purine/pyrimidine phosphoribosyltransferase family. PyrE subfamily. As to quaternary structure, homodimer. The cofactor is Mg(2+).

The catalysed reaction is orotidine 5'-phosphate + diphosphate = orotate + 5-phospho-alpha-D-ribose 1-diphosphate. The protein operates within pyrimidine metabolism; UMP biosynthesis via de novo pathway; UMP from orotate: step 1/2. Catalyzes the transfer of a ribosyl phosphate group from 5-phosphoribose 1-diphosphate to orotate, leading to the formation of orotidine monophosphate (OMP). In Colwellia psychrerythraea (strain 34H / ATCC BAA-681) (Vibrio psychroerythus), this protein is Orotate phosphoribosyltransferase.